The following is a 221-amino-acid chain: Octanoyltransferase (221 aa).

Residues 35–221 (ESYENRIIFC…RELLAALLSK (187 aa)) form the BPL/LPL catalytic domain. Residues 80-87 (RGGDITYH), 152-154 (AIG), and 165-167 (GLA) each bind substrate. The active-site Acyl-thioester intermediate is cysteine 183.

The protein belongs to the LipB family.

The protein resides in the cytoplasm. It carries out the reaction octanoyl-[ACP] + L-lysyl-[protein] = N(6)-octanoyl-L-lysyl-[protein] + holo-[ACP] + H(+). The protein operates within protein modification; protein lipoylation via endogenous pathway; protein N(6)-(lipoyl)lysine from octanoyl-[acyl-carrier-protein]: step 1/2. Its function is as follows. Catalyzes the transfer of endogenously produced octanoic acid from octanoyl-acyl-carrier-protein onto the lipoyl domains of lipoate-dependent enzymes. Lipoyl-ACP can also act as a substrate although octanoyl-ACP is likely to be the physiological substrate. The sequence is that of Octanoyltransferase from Bacteroides fragilis (strain ATCC 25285 / DSM 2151 / CCUG 4856 / JCM 11019 / LMG 10263 / NCTC 9343 / Onslow / VPI 2553 / EN-2).